A 331-amino-acid polypeptide reads, in one-letter code: NAD-dependent protein deacetylase HST2 (331 aa).

The Deacetylase sirtuin-type domain occupies 1-262 (MPSLDDILKP…EKLCTLLGLD (262 aa)). Residues 26-46 (GAGISTGAGIPDFRSPDTGLY) and 109-112 (QNID) each bind NAD(+). Catalysis depends on His129, which acts as the Proton acceptor. Cys137, Cys140, Cys161, and Cys164 together coordinate Zn(2+). Residues 201 to 203 (GTS), 226 to 228 (NKE), and Cys248 contribute to the NAD(+) site. Positions 276–331 (YSKAETKETKMHEIEDKLKEEAHLKEDKHTTKVDKKEKQNDANDKELEQLIDKLKI) form a coiled coil. The segment at 283-319 (ETKMHEIEDKLKEEAHLKEDKHTTKVDKKEKQNDAND) is disordered.

Belongs to the sirtuin family. Class I subfamily. The cofactor is Zn(2+).

It localises to the cytoplasm. The protein resides in the nucleus. It carries out the reaction N(6)-acetyl-L-lysyl-[protein] + NAD(+) + H2O = 2''-O-acetyl-ADP-D-ribose + nicotinamide + L-lysyl-[protein]. Its function is as follows. NAD-dependent histone deacetylase that is involved in nuclear silencing events. Derepresses subtelomeric silencing and increases repression in nucleolar (rDNA) silencing. Its function is negatively regulated by active nuclear export. The polypeptide is NAD-dependent protein deacetylase HST2 (HST2) (Candida albicans (strain SC5314 / ATCC MYA-2876) (Yeast)).